The primary structure comprises 355 residues: Zinc transporter ZIP13 homolog (355 aa).

An N-linked (GlcNAc...) asparagine glycan is attached at Asn-4. 3 helical membrane-spanning segments follow: residues 37–57 (VFSL…LIII), 79–99 (VLLS…LLPE), and 118–138 (LWVL…SGYA). An N-linked (GlcNAc...) asparagine glycan is attached at Asn-218. The next 2 membrane-spanning stretches (helical) occupy residues 273–293 (LLTA…SGVT) and 301–321 (SWIM…TVLP).

It belongs to the ZIP transporter (TC 2.A.5) family. KE4/Catsup subfamily.

The protein localises to the basolateral cell membrane. It localises to the golgi apparatus membrane. Functionally, involved in zinc transport and homeostasis. The polypeptide is Zinc transporter ZIP13 homolog (Zip99C) (Drosophila melanogaster (Fruit fly)).